A 511-amino-acid polypeptide reads, in one-letter code: Centrosomal protein CCDC61 (511 aa).

The interval 1–144 (MEVGTVVQEE…PLPLPYLGKP (144 aa)) is head domain. Residues 147-272 (AELQKEIRAL…RVKSLTTELA (126 aa)) adopt a coiled-coil conformation. Disordered regions lie at residues 306–403 (TRVG…SREP) and 447–486 (RGRKLMSNGPAVSRGRHINKKPMCSTPAQRMRAGDTSMDT). The segment covering 315–335 (GSRERIEDRGRRSEERVRRAD) has biased composition (basic and acidic residues). A compositionally biased stretch (polar residues) spans 338–352 (GSRNCITRPSPSPTG). Over residues 366–378 (DRQRRQKEAELKS) the composition is skewed to basic and acidic residues.

It belongs to the CCDC61 family. Forms homodimers (via head domain).

The protein localises to the cytoplasm. Its subcellular location is the cytoskeleton. It is found in the microtubule organizing center. The protein resides in the centrosome. It localises to the centriolar satellite. The protein localises to the cilium basal body. Functionally, microtubule-binding centrosomal protein required for centriole cohesion, independently of the centrosome-associated protein/CEP250 and rootletin/CROCC linker. In interphase, required for anchoring microtubule at the mother centriole subdistal appendages and for centrosome positioning. During mitosis, may be involved in spindle assembly and chromatin alignment by regulating the organization of spindle microtubules into a symmetrical structure. Plays a non-essential role in ciliogenesis. This chain is Centrosomal protein CCDC61, found in Danio rerio (Zebrafish).